The chain runs to 325 residues: Lipid droplet-associated hydrolase (325 aa).

The Nucleophile role is filled by serine 139. Catalysis depends on charge relay system residues aspartate 271 and histidine 300.

It belongs to the AB hydrolase superfamily. LDAH family. As to expression, present in macrophage-rich areas in atherosclerotic lesions (at protein level). Expressed in monocytes and monocyte-derived macrophages (at protein level).

It is found in the lipid droplet. The protein resides in the endoplasmic reticulum. It carries out the reaction a cholesterol ester + H2O = cholesterol + a fatty acid + H(+). Functionally, probable serine lipid hydrolase associated with lipid droplets. Has low cholesterol esterase activity. Appears to lack triglyceride lipase activity. Involved in cholesterol and triglyceride homeostasis; has opposing effects, stimulating cellular triglyceride accumulation and cellular cholesterol release. Acts antagonistically with PNPLA2/ATGL in regulation of cellular lipid stores. May regulate triglyceride accumulation indirectly through stimulation of PNPLA2/ATGL ubiquitination and proteasomal degradation. Promotes microtubule-dependent lipid droplet fusion. Highly expressed in macrophage-rich areas in atherosclerotic lesions, suggesting that it could promote cholesterol ester turnover in macrophages. This chain is Lipid droplet-associated hydrolase, found in Homo sapiens (Human).